Consider the following 437-residue polypeptide: UBX domain-containing protein 6 (437 aa).

Disordered stretches follow at residues 1-45 (MNSF…AQGG) and 89-109 (ERRQVEDLNISGTSSLQQPDR). Residues 7–18 (FLNKKRVQNHFK) show a composition bias toward basic residues. Residues 179 to 251 (ETAIETICKY…VFTKPSDVHL (73 aa)) form the PUB domain. The region spanning 332 to 409 (YRYKYTLIRV…SLAPAALLHV (78 aa)) is the UBX domain.

Interacts with cdc-48.1 (via N-terminus) and cdc-48.2 (via N-terminus). As to expression, expressed in the pharynx and some head neurons.

In terms of biological role, probably acts as an adapter for ATPase cdc-48.1 and/or cdc-48.2, conferring substrate specificity. Involved in the lysosomal clearance of cellular material in diet restricted conditions. The sequence is that of UBX domain-containing protein 6 from Caenorhabditis elegans.